A 187-amino-acid polypeptide reads, in one-letter code: dTTP/UTP pyrophosphatase (187 aa).

Residue aspartate 72 is the Proton acceptor of the active site.

It belongs to the Maf family. YhdE subfamily. A divalent metal cation serves as cofactor.

The protein resides in the cytoplasm. It catalyses the reaction dTTP + H2O = dTMP + diphosphate + H(+). The catalysed reaction is UTP + H2O = UMP + diphosphate + H(+). Its function is as follows. Nucleoside triphosphate pyrophosphatase that hydrolyzes dTTP and UTP. May have a dual role in cell division arrest and in preventing the incorporation of modified nucleotides into cellular nucleic acids. In Vibrio cholerae serotype O1 (strain ATCC 39315 / El Tor Inaba N16961), this protein is dTTP/UTP pyrophosphatase.